The primary structure comprises 133 residues: Aspartate 1-decarboxylase (133 aa).

S26 (schiff-base intermediate with substrate; via pyruvic acid) is an active-site residue. S26 bears the Pyruvic acid (Ser) mark. T58 lines the substrate pocket. Y59 acts as the Proton donor in catalysis. Position 74-76 (74-76 (GAA)) interacts with substrate.

It belongs to the PanD family. In terms of assembly, heterooctamer of four alpha and four beta subunits. Pyruvate serves as cofactor. In terms of processing, is synthesized initially as an inactive proenzyme, which is activated by self-cleavage at a specific serine bond to produce a beta-subunit with a hydroxyl group at its C-terminus and an alpha-subunit with a pyruvoyl group at its N-terminus.

Its subcellular location is the cytoplasm. The enzyme catalyses L-aspartate + H(+) = beta-alanine + CO2. Its pathway is cofactor biosynthesis; (R)-pantothenate biosynthesis; beta-alanine from L-aspartate: step 1/1. In terms of biological role, catalyzes the pyruvoyl-dependent decarboxylation of aspartate to produce beta-alanine. The polypeptide is Aspartate 1-decarboxylase (Legionella pneumophila subsp. pneumophila (strain Philadelphia 1 / ATCC 33152 / DSM 7513)).